We begin with the raw amino-acid sequence, 68 residues long: Metallothionein-3 (68 aa).

Methionine 1 is subject to N-acetylmethionine. Residues 1 to 30 (MDPETCPCPTGGSCTCSDPCKCEGCTCASS) are beta. Residues cysteine 6, cysteine 8, cysteine 14, cysteine 16, cysteine 20, cysteine 22, cysteine 25, and cysteine 27 each coordinate a divalent metal cation. The segment at 31–68 (KKSCCSCCPAECEKCAKDCVCKGGEGAEAEEKKCSCCQ) is alpha. A Phosphoserine modification is found at serine 33. Residues cysteine 34, cysteine 35, cysteine 37, cysteine 38, cysteine 42, cysteine 45, cysteine 49, cysteine 51, cysteine 64, cysteine 66, and cysteine 67 each coordinate a divalent metal cation.

This sequence belongs to the metallothionein superfamily. Type 1 family.

Functionally, binds heavy metals. Contains five zinc and one copper atoms per polypeptide chain and only a negligible amount of cadmium. The chain is Metallothionein-3 (MT3) from Bos mutus grunniens (Wild yak).